The chain runs to 445 residues: Exodeoxyribonuclease 7 large subunit (445 aa).

Belongs to the XseA family. In terms of assembly, heterooligomer composed of large and small subunits.

It is found in the cytoplasm. The enzyme catalyses Exonucleolytic cleavage in either 5'- to 3'- or 3'- to 5'-direction to yield nucleoside 5'-phosphates.. Bidirectionally degrades single-stranded DNA into large acid-insoluble oligonucleotides, which are then degraded further into small acid-soluble oligonucleotides. The chain is Exodeoxyribonuclease 7 large subunit from Xanthomonas axonopodis pv. citri (strain 306).